Consider the following 618-residue polypeptide: Chaperone protein DnaK (618 aa).

T175 carries the post-translational modification Phosphothreonine; by autocatalysis. Residues 579–618 form a disordered region; that stretch reads GAPGAEGFDSNMAGEANAGQNANNDDNVVDADYKVEDDEK. Residues 591–604 show a composition bias toward low complexity; sequence AGEANAGQNANNDD.

It belongs to the heat shock protein 70 family.

In terms of biological role, acts as a chaperone. The chain is Chaperone protein DnaK from Clostridium tetani (strain Massachusetts / E88).